Consider the following 376-residue polypeptide: uncharacterized protein (376 aa).

2 stretches are compositionally biased toward low complexity: residues 73-99 (NNSI…NNNN) and 228-243 (SSFS…TVSS). Disordered stretches follow at residues 73–100 (NNSI…NNNL) and 222–269 (EQDP…KISD).

This is an uncharacterized protein from Saccharomyces cerevisiae (strain ATCC 204508 / S288c) (Baker's yeast).